The chain runs to 316 residues: Phospholipase A1 2 (316 aa).

Positions 1–4 are cleaved as a signal peptide; that stretch reads ADDL. Residues 5 to 14 constitute a propeptide that is removed on maturation; sequence TTLRNGTLDR. C20 and C103 are disulfide-bonded. S153 (nucleophile) is an active-site residue. Residue D181 is the Charge relay system of the active site. Cystine bridges form between C192–C197 and C235–C240. Catalysis depends on H242, which acts as the Charge relay system. 3 disulfide bridges follow: C257–C284, C258–C309, and C277–C282.

It belongs to the AB hydrolase superfamily. Lipase family. As to expression, expressed by the venom gland.

It localises to the secreted. It carries out the reaction a 1,2-diacyl-sn-glycero-3-phosphocholine + H2O = a 2-acyl-sn-glycero-3-phosphocholine + a fatty acid + H(+). Functionally, catalyzes the hydrolysis of phosphatidylcholine with phospholipase A1 activity. May act as an allergen and induce hemolytic activity. The protein is Phospholipase A1 2 of Polistes dominula (European paper wasp).